The following is a 471-amino-acid chain: Meiosis-specific with OB domain-containing protein (471 aa).

The OB DNA-binding region spans 167–272 (IINVLAAVKS…EANILLNFIR (106 aa)).

This sequence belongs to the MEIOB family. As to quaternary structure, component of a multiprotein complex with RPA2 and SPATA22. Interacts with SPATA22. Interacts with the complex BRME1:HSF2BP:BRCA2.

Its subcellular location is the cytoplasm. It localises to the nucleus. The protein localises to the chromosome. Single-stranded DNA-binding protein required for homologous recombination in meiosis I. Required for double strand breaks (DSBs) repair and crossover formation and promotion of faithful and complete synapsis. Not required for the initial loading of recombinases but required to maintain a proper number of RAD51 and DMC1 foci after the zygotene stage. May act by ensuring the stabilization of recombinases, which is required for successful homology search and meiotic recombination. Displays Single-stranded DNA 3'-5' exonuclease activity in vitro. The sequence is that of Meiosis-specific with OB domain-containing protein (MEIOB) from Macaca fascicularis (Crab-eating macaque).